Here is a 225-residue protein sequence, read N- to C-terminus: NAD(P)H-quinone oxidoreductase subunit K, chloroplastic (225 aa).

The [4Fe-4S] cluster site is built by Cys43, Cys44, Cys108, and Cys139.

It belongs to the complex I 20 kDa subunit family. NDH is composed of at least 16 different subunits, 5 of which are encoded in the nucleus. [4Fe-4S] cluster serves as cofactor.

Its subcellular location is the plastid. The protein localises to the chloroplast thylakoid membrane. It catalyses the reaction a plastoquinone + NADH + (n+1) H(+)(in) = a plastoquinol + NAD(+) + n H(+)(out). It carries out the reaction a plastoquinone + NADPH + (n+1) H(+)(in) = a plastoquinol + NADP(+) + n H(+)(out). In terms of biological role, NDH shuttles electrons from NAD(P)H:plastoquinone, via FMN and iron-sulfur (Fe-S) centers, to quinones in the photosynthetic chain and possibly in a chloroplast respiratory chain. The immediate electron acceptor for the enzyme in this species is believed to be plastoquinone. Couples the redox reaction to proton translocation, and thus conserves the redox energy in a proton gradient. The chain is NAD(P)H-quinone oxidoreductase subunit K, chloroplastic from Dioscorea elephantipes (Elephant's foot yam).